A 593-amino-acid polypeptide reads, in one-letter code: MSGKIEYISGPVVKADLPGARLYELVFVGEIKLFGEVVRVQGDKAFIQVYEDTTGLKPGEPVVRTGEPLSAWLGPTIMGKIYDGVQRPLKNIEEISKSPFIARGVGYDQAPPLDLKAEFDFKPNVKPGEEVYPGDVLGSVKETELITHYILYPPLPEYVPGTVEWIADGKYKVDDVIARIKTKRGVIEVKMWHKWPVRRPRPFREKLPPVEPLITGVRTIDTMFPIAKGGTAAIPGPFGSGKTVAIRTLSMYAQSRIIIPVLCGERGNEAADALQGLLKLKDPNTGRPLLERTTIIVNTSNMPVAAREASVYMGTTIGEYFRDQGYDVLVLADSTSRWAEAMREVALRIGEMPSEEGYPAYLPTRLAEFYERAGRVVLMGSKERIGSLTIAASVSPPGGDFTEPVTSNTLRFIGAFWPLSPRLAYSRHYPAIDWLLAFSRYVDTVEVWWSKNISPDWRKIRDTLQSILVKEAELQEIVRILGTEALSEYEKHILNVAYMIREGFLKQDAYNPVDTPSSPIKQYLLMKAIYAYYEEGLKAIEAGIPASVLRELETVKRLPRLRMEITNDVAKEELTKFIEMLISEIRTTISKRQ.

236 to 243 (GPFGSGKT) is a binding site for ATP.

It belongs to the ATPase alpha/beta chains family. As to quaternary structure, has multiple subunits with at least A(3), B(3), C, D, E, F, H, I and proteolipid K(x).

It localises to the cell membrane. It catalyses the reaction ATP + H2O + 4 H(+)(in) = ADP + phosphate + 5 H(+)(out). In terms of biological role, component of the A-type ATP synthase that produces ATP from ADP in the presence of a proton gradient across the membrane. The A chain is the catalytic subunit. The polypeptide is A-type ATP synthase subunit A (Pyrobaculum islandicum (strain DSM 4184 / JCM 9189 / GEO3)).